The sequence spans 494 residues: Guanosine-5'-triphosphate,3'-diphosphate pyrophosphatase (494 aa).

Belongs to the GppA/Ppx family. GppA subfamily.

The enzyme catalyses guanosine 3'-diphosphate 5'-triphosphate + H2O = guanosine 3',5'-bis(diphosphate) + phosphate + H(+). It participates in purine metabolism; ppGpp biosynthesis; ppGpp from GTP: step 2/2. Its function is as follows. Catalyzes the conversion of pppGpp to ppGpp. Guanosine pentaphosphate (pppGpp) is a cytoplasmic signaling molecule which together with ppGpp controls the 'stringent response', an adaptive process that allows bacteria to respond to amino acid starvation, resulting in the coordinated regulation of numerous cellular activities. The protein is Guanosine-5'-triphosphate,3'-diphosphate pyrophosphatase of Escherichia coli (strain 55989 / EAEC).